The following is a 130-amino-acid chain: Small ribosomal subunit protein uS11 (130 aa).

Residues 109 to 130 form a disordered region; that stretch reads EDVTPIPHDGTGRPGGKRGRRV.

It belongs to the universal ribosomal protein uS11 family. As to quaternary structure, part of the 30S ribosomal subunit.

Its function is as follows. Located on the platform of the 30S subunit. The polypeptide is Small ribosomal subunit protein uS11 (Methanosphaera stadtmanae (strain ATCC 43021 / DSM 3091 / JCM 11832 / MCB-3)).